Reading from the N-terminus, the 434-residue chain is Trigger factor (434 aa).

The PPIase FKBP-type domain occupies 161–246 (EDRVTVDFTG…LKKVEQRELP (86 aa)).

It belongs to the FKBP-type PPIase family. Tig subfamily.

The protein localises to the cytoplasm. The catalysed reaction is [protein]-peptidylproline (omega=180) = [protein]-peptidylproline (omega=0). In terms of biological role, involved in protein export. Acts as a chaperone by maintaining the newly synthesized protein in an open conformation. Functions as a peptidyl-prolyl cis-trans isomerase. The chain is Trigger factor from Sodalis glossinidius (strain morsitans).